We begin with the raw amino-acid sequence, 304 residues long: CBY1-interacting BAR domain-containing protein 2 (304 aa).

Residues 6 to 217 are BAR-like; it reads SRDSQVRVME…EKYDLERDLL (212 aa).

This sequence belongs to the CIBAR family. As to quaternary structure, homodimer (via BAR-like domain). Heterodimer (via BAR-like domain) with FAM92A. Interacts with CBY1. Restricted to certain tissues, most prominently expressed in multicilaited tissues.

The protein localises to the cytoplasm. Its subcellular location is the cytoskeleton. The protein resides in the microtubule organizing center. It is found in the centrosome. It localises to the centriole. The protein localises to the cilium basal body. In terms of biological role, may play a role in ciliogenesis. In cooperation with CBY1 may facilitate ciliogenesis likely by the recruitment and fusion of endosomal vesicles at distal appendages during early stages of ciliogenesis. This Homo sapiens (Human) protein is CBY1-interacting BAR domain-containing protein 2.